Reading from the N-terminus, the 495-residue chain is Sugar phosphate exchanger 3 (495 aa).

The chain crosses the membrane as a helical span at residues 16 to 36 (FSHHHMVVFLLTFFSYSLLHA). Asn-58 carries N-linked (GlcNAc...) asparagine glycosylation. A run of 5 helical transmembrane segments spans residues 82-102 (TLFL…GLFI), 114-134 (WVLS…GTLT), 148-168 (LWIV…AVMG), 178-198 (VVFG…ACLA), and 210-230 (FLVT…GLLV). An N-linked (GlcNAc...) asparagine glycan is attached at Asn-267. The next 6 membrane-spanning stretches (helical) occupy residues 298–318 (LAYA…PFYL), 334–354 (IWYD…SDML), 358–378 (APVL…YSRS), 387–407 (LLMA…SSAI), 429–449 (GIVD…VSLI), and 453–473 (LGWM…VLFI).

It belongs to the major facilitator superfamily. Organophosphate:Pi antiporter (OPA) (TC 2.A.1.4) family. In terms of assembly, interacts with ATRAID; the interaction is direct and both proteins are mutually dependent for their stability. Glycosylated.

Its subcellular location is the endoplasmic reticulum membrane. The protein localises to the lysosome membrane. Functionally, unlike the other SLC37 members, lacks glucose-6-phosphate antiporter activity. In osteoclasts, forms a transporter complex with ATRAID for nitrogen-containing-bisphophonates (N-BPs) required for releasing N-BP molecules that have trafficked to lysosomes through fluid-phase endocytosis into the cytosol. The protein is Sugar phosphate exchanger 3 (SLC37A3) of Bos taurus (Bovine).